The following is a 138-amino-acid chain: Biopolymer transport protein exbD1 (138 aa).

The Cytoplasmic segment spans residues 1 to 16 (MIKSSAKHNDFGLTPD). A helical transmembrane segment spans residues 17–37 (LTPLLDIIFIVMVFLLLTASV). Residues 38-138 (RLESLEVALP…TQLLTEPSHS (101 aa)) lie on the Periplasmic side of the membrane.

It belongs to the ExbD/TolR family. As to quaternary structure, the accessory proteins ExbB and ExbD seem to form a complex with TonB.

It is found in the cell inner membrane. In terms of biological role, involved in the TonB-dependent energy-dependent transport of various receptor-bound substrates. The chain is Biopolymer transport protein exbD1 (exbD1) from Vibrio cholerae serotype O1 (strain ATCC 39315 / El Tor Inaba N16961).